Here is a 660-residue protein sequence, read N- to C-terminus: Bifunctional polymyxin resistance protein ArnA (660 aa).

The tract at residues 1-304 is formyltransferase ArnAFT; it reads MKAVIFAYHD…TLGLVAGACL (304 aa). His104 acts as the Proton donor; for formyltransferase activity in catalysis. (6R)-10-formyltetrahydrofolate-binding positions include Arg114 and 136-140; that span reads VKRAD. The dehydrogenase ArnADH stretch occupies residues 314–660; that stretch reads RRIRVLILGV…RSVDIAERAS (347 aa). Residues Asp347 and 368–369 each bind NAD(+); that span reads DI. UDP-alpha-D-glucuronate-binding positions include Ala393, Tyr398, and 432-433; that span reads TS. Glu434 acts as the Proton acceptor; for decarboxylase activity in catalysis. UDP-alpha-D-glucuronate is bound by residues Arg460, Asn492, 526–535, and Tyr613; that span reads KLIDGGQQKR. The active-site Proton donor; for decarboxylase activity is Arg619.

The protein in the N-terminal section; belongs to the Fmt family. UDP-L-Ara4N formyltransferase subfamily. It in the C-terminal section; belongs to the NAD(P)-dependent epimerase/dehydratase family. UDP-glucuronic acid decarboxylase subfamily. As to quaternary structure, homohexamer, formed by a dimer of trimers.

The catalysed reaction is UDP-alpha-D-glucuronate + NAD(+) = UDP-beta-L-threo-pentopyranos-4-ulose + CO2 + NADH. The enzyme catalyses UDP-4-amino-4-deoxy-beta-L-arabinose + (6R)-10-formyltetrahydrofolate = UDP-4-deoxy-4-formamido-beta-L-arabinose + (6S)-5,6,7,8-tetrahydrofolate + H(+). It functions in the pathway nucleotide-sugar biosynthesis; UDP-4-deoxy-4-formamido-beta-L-arabinose biosynthesis; UDP-4-deoxy-4-formamido-beta-L-arabinose from UDP-alpha-D-glucuronate: step 1/3. It participates in nucleotide-sugar biosynthesis; UDP-4-deoxy-4-formamido-beta-L-arabinose biosynthesis; UDP-4-deoxy-4-formamido-beta-L-arabinose from UDP-alpha-D-glucuronate: step 3/3. The protein operates within bacterial outer membrane biogenesis; lipopolysaccharide biosynthesis. Bifunctional enzyme that catalyzes the oxidative decarboxylation of UDP-glucuronic acid (UDP-GlcUA) to UDP-4-keto-arabinose (UDP-Ara4O) and the addition of a formyl group to UDP-4-amino-4-deoxy-L-arabinose (UDP-L-Ara4N) to form UDP-L-4-formamido-arabinose (UDP-L-Ara4FN). The modified arabinose is attached to lipid A and is required for resistance to polymyxin and cationic antimicrobial peptides. The polypeptide is Bifunctional polymyxin resistance protein ArnA (Salmonella paratyphi A (strain ATCC 9150 / SARB42)).